Consider the following 367-residue polypeptide: Choline-phosphate cytidylyltransferase A (367 aa).

An N-acetylmethionine modification is found at M1. The interval M1–P31 is disordered. N6-acetyllysine is present on K8. CTP-binding residues include I84, F85, H92, and K122. Phosphocholine contacts are provided by K122 and W151. H168, D169, Y173, Q195, R196, T197, and I200 together coordinate CTP. Amphipathic regions lie at residues K228–G287 and A298–S315. A Phosphoserine modification is found at S233. Residues I272 to F293 are autoinhibitory (AI). Positions A313–D367 are disordered. S315 carries the phosphoserine; by PKC modification. The span at S315–P324 shows a compositional bias: polar residues. Phosphoserine occurs at positions 319, 321, 322, and 323. The stretch at S319–P324 is repeat 1. The segment at S319–P348 is 3 X repeats. The residue at position 325 (T325) is a Phosphothreonine. 2 positions are modified to phosphoserine: S329 and S331. One copy of the 2; approximate repeat lies at S329–S333. The span at P330 to S352 shows a compositional bias: low complexity. S333 carries the post-translational modification Phosphoserine; by PKC. Residue T342 is modified to Phosphothreonine. 6 positions are modified to phosphoserine: S343, S345, S346, S347, S350, and S352. Repeat 3 spans residues S343 to P348. T358 is subject to Phosphothreonine. S362 is subject to Phosphoserine; by CK2.

This sequence belongs to the cytidylyltransferase family. Homodimer. Post-translationally, the serine residues of the C-terminus are phosphorylated. The inactive soluble form is stabilized by phosphorylation, the active membrane bound form is promoted by anionic lipids or diacylglycerol, and is stabilized by dephosphorylation. The N-terminus is blocked. In terms of processing, monoubiquitinated by the SCF(FBXL2) complex, leading to proteasomal degradation.

It localises to the cytoplasm. Its subcellular location is the cytosol. The protein resides in the membrane. The protein localises to the endoplasmic reticulum membrane. It is found in the nucleus. It carries out the reaction phosphocholine + CTP + H(+) = CDP-choline + diphosphate. It participates in phospholipid metabolism; phosphatidylcholine biosynthesis; phosphatidylcholine from phosphocholine: step 1/2. With respect to regulation, interconverts between an inactive cytosolic form and an active membrane-bound form. Activation involves disruption of an inhibitory interaction between helices at the base of the active site and the autoinhibitory (AI) region. Activated by N-methylethanolamine. Activated by oleic acid-containing phosphatidylcholine vesicles. In terms of biological role, catalyzes the key rate-limiting step in the CDP-choline pathway for phosphatidylcholine biosynthesis. This Rattus norvegicus (Rat) protein is Choline-phosphate cytidylyltransferase A (Pcyt1a).